We begin with the raw amino-acid sequence, 361 residues long: 4-oxalomesaconate tautomerase (361 aa).

The protein belongs to the PrpF family.

The catalysed reaction is (1E)-4-oxobut-1-ene-1,2,4-tricarboxylate = 4-carboxy-2-hydroxy-cis,cis-muconate. Catalyzes the tautomerization of the 4-oxalomesaconic acid keto (OMAketo) generated by GalA dioxygenase to 4-oxalomesaconic acid enol (OMAenol). Mediates the second step in gallate degradation pathway. This chain is 4-oxalomesaconate tautomerase (galD), found in Pseudomonas putida (strain ATCC 47054 / DSM 6125 / CFBP 8728 / NCIMB 11950 / KT2440).